Consider the following 200-residue polypeptide: Superoxide dismutase [Mn] (200 aa).

His27, His77, Asp160, and His164 together coordinate Mn(2+).

The protein belongs to the iron/manganese superoxide dismutase family. As to quaternary structure, homodimer. Requires Mn(2+) as cofactor.

The enzyme catalyses 2 superoxide + 2 H(+) = H2O2 + O2. In terms of biological role, destroys superoxide anion radicals which are normally produced within the cells and which are toxic to biological systems. The protein is Superoxide dismutase [Mn] (sodB) of Rhizobium meliloti (strain 1021) (Ensifer meliloti).